We begin with the raw amino-acid sequence, 418 residues long: Putative competence-damage inducible protein (418 aa).

Belongs to the CinA family.

The chain is Putative competence-damage inducible protein from Streptococcus pneumoniae serotype 19F (strain G54).